The chain runs to 262 residues: Hydroxyethylthiazole kinase (262 aa).

Methionine 50 contributes to the substrate binding site. Residues arginine 125 and threonine 171 each coordinate ATP. Residue glycine 198 coordinates substrate.

Belongs to the Thz kinase family. Requires Mg(2+) as cofactor.

The catalysed reaction is 5-(2-hydroxyethyl)-4-methylthiazole + ATP = 4-methyl-5-(2-phosphooxyethyl)-thiazole + ADP + H(+). It functions in the pathway cofactor biosynthesis; thiamine diphosphate biosynthesis; 4-methyl-5-(2-phosphoethyl)-thiazole from 5-(2-hydroxyethyl)-4-methylthiazole: step 1/1. Functionally, catalyzes the phosphorylation of the hydroxyl group of 4-methyl-5-beta-hydroxyethylthiazole (THZ). This chain is Hydroxyethylthiazole kinase, found in Shigella boydii serotype 4 (strain Sb227).